The primary structure comprises 89 residues: uncharacterized protein (89 aa).

This is an uncharacterized protein from Dictyostelium discoideum (Social amoeba).